The chain runs to 361 residues: Fructose-1,6-bisphosphatase class 1 2 (361 aa).

The Mg(2+) site is built by Glu-110, Asp-134, Leu-136, and Asp-137. Substrate is bound by residues 137–140 (DGSS), Asn-231, Tyr-264, and Lys-294. Position 300 (Glu-300) interacts with Mg(2+).

This sequence belongs to the FBPase class 1 family. As to quaternary structure, homotetramer. Requires Mg(2+) as cofactor.

It is found in the cytoplasm. It catalyses the reaction beta-D-fructose 1,6-bisphosphate + H2O = beta-D-fructose 6-phosphate + phosphate. It functions in the pathway carbohydrate biosynthesis; gluconeogenesis. The polypeptide is Fructose-1,6-bisphosphatase class 1 2 (Salinibacter ruber (strain DSM 13855 / M31)).